Consider the following 180-residue polypeptide: Protein GrpE (180 aa).

The segment at 1-21 is disordered; that stretch reads MSEEVKEQNLPEVEPVQEAAS.

The protein belongs to the GrpE family. In terms of assembly, homodimer.

It localises to the cytoplasm. Functionally, participates actively in the response to hyperosmotic and heat shock by preventing the aggregation of stress-denatured proteins, in association with DnaK and GrpE. It is the nucleotide exchange factor for DnaK and may function as a thermosensor. Unfolded proteins bind initially to DnaJ; upon interaction with the DnaJ-bound protein, DnaK hydrolyzes its bound ATP, resulting in the formation of a stable complex. GrpE releases ADP from DnaK; ATP binding to DnaK triggers the release of the substrate protein, thus completing the reaction cycle. Several rounds of ATP-dependent interactions between DnaJ, DnaK and GrpE are required for fully efficient folding. This chain is Protein GrpE, found in Campylobacter concisus (strain 13826).